The sequence spans 384 residues: MLPFIRSDLAQFNAYKPHPSSDTASAVPPQLDRLDTNESPYDLPPELKQKLAWTFQQVIESNRYPDGGHETLKSAIAEYVNESANISSLRFTAANISVGNGSDELIRSLLIATCLSGEGSILVANPTFSMYGILAQTLGIPVVSVSRNPDNFAIDLTAAQSAIEQTLNPPIRVVFVVHPNSPTANPLTANELRWLKSLSERILVVVDEAYFEFSQNTLVSELAQRPNWIILRTFSKAFRLAAMRVGYCVAHPEAIAILEKVRLPYNLPSFSIASALVALQNRAILLESIPQTLDERTKLINAFSQHPALAVAESAANFIFLRLKADSDNSSDTTLLNLHQQLKNSGTLVRQISGGLRITIGTPEENIRTLNHIQTALIKPELVG.

N6-(pyridoxal phosphate)lysine is present on Lys236.

This sequence belongs to the class-II pyridoxal-phosphate-dependent aminotransferase family. Histidinol-phosphate aminotransferase subfamily. In terms of assembly, homodimer. It depends on pyridoxal 5'-phosphate as a cofactor.

The catalysed reaction is L-histidinol phosphate + 2-oxoglutarate = 3-(imidazol-4-yl)-2-oxopropyl phosphate + L-glutamate. Its pathway is amino-acid biosynthesis; L-histidine biosynthesis; L-histidine from 5-phospho-alpha-D-ribose 1-diphosphate: step 7/9. This Nostoc sp. (strain PCC 7120 / SAG 25.82 / UTEX 2576) protein is Histidinol-phosphate aminotransferase 2 (hisC2).